The sequence spans 312 residues: Non-structural protein 12A (312 aa).

The segment covering 1–23 (MFKSGSGSLKRSGSISSVKSFSG) has biased composition (low complexity). 3 disordered regions span residues 1–37 (MFKS…RGSV), 62–99 (FVPE…QNAD), and 111–161 (ESSK…GTGD). The span at 63-77 (VPEKTKSEGNLKDKS) shows a compositional bias: basic and acidic residues. The span at 78 to 98 (SVITGNFGSSGPINAHTNQNA) shows a compositional bias: polar residues. The segment covering 122–134 (DARHTATDSRLSQ) has biased composition (basic and acidic residues).

Belongs to the phytoreovirus non-structural protein Pns12A family.

Its subcellular location is the host cytoplasm. In terms of biological role, constituent of viral factories. Binds to ssRNA and dsRNA. In Alopecurus aequalis (Barnyard grass), this protein is Non-structural protein 12A.